A 449-amino-acid chain; its full sequence is Ribulose bisphosphate carboxylase large chain (449 aa).

Residues 1 to 2 constitute a propeptide that is removed on maturation; it reads MS. P3 carries the post-translational modification N-acetylproline. An N6,N6,N6-trimethyllysine modification is found at K14. Positions 123 and 173 each coordinate substrate. The active-site Proton acceptor is the K175. K177 contacts substrate. The Mg(2+) site is built by K201, D203, and E204. K201 bears the N6-carboxylysine mark. Catalysis depends on H294, which acts as the Proton acceptor. Residues X295, H327, and S379 each coordinate substrate.

Belongs to the RuBisCO large chain family. Type I subfamily. In terms of assembly, heterohexadecamer of 8 large chains and 8 small chains; disulfide-linked. The disulfide link is formed within the large subunit homodimers. Requires Mg(2+) as cofactor. In terms of processing, the disulfide bond which can form in the large chain dimeric partners within the hexadecamer appears to be associated with oxidative stress and protein turnover.

It is found in the plastid. The protein resides in the chloroplast. It carries out the reaction 2 (2R)-3-phosphoglycerate + 2 H(+) = D-ribulose 1,5-bisphosphate + CO2 + H2O. The enzyme catalyses D-ribulose 1,5-bisphosphate + O2 = 2-phosphoglycolate + (2R)-3-phosphoglycerate + 2 H(+). In terms of biological role, ruBisCO catalyzes two reactions: the carboxylation of D-ribulose 1,5-bisphosphate, the primary event in carbon dioxide fixation, as well as the oxidative fragmentation of the pentose substrate in the photorespiration process. Both reactions occur simultaneously and in competition at the same active site. The sequence is that of Ribulose bisphosphate carboxylase large chain from Salacia pallescens.